We begin with the raw amino-acid sequence, 418 residues long: Alpha-1-antitrypsin (418 aa).

A signal peptide spans 1 to 24 (MPSSVSWGILLLAGLCCLVPVSLA). Serine 38 is modified (phosphoserine). Residues asparagine 70, asparagine 107, and asparagine 271 are each glycosylated (N-linked (GlcNAc...) asparagine). Residues 373–392 (GAMFLEAIPMSIPPEVKFNK) are RCL. The residue at position 383 (serine 383) is a Phosphoserine.

It belongs to the serpin family. As to quaternary structure, interacts with CELA2A. Interacts with ERGIC3 and LMAN1/ERGIC53. Interacts with PRSS1/Trypsin. In terms of tissue distribution, plasma.

It is found in the secreted. Inhibitor of serine proteases. Its primary target is elastase, but it also has a moderate affinity for plasmin and thrombin. Inhibits trypsin, chymotrypsin and plasminogen activator. The chain is Alpha-1-antitrypsin (SERPINA1) from Pongo abelii (Sumatran orangutan).